Consider the following 225-residue polypeptide: Lipoarabinomannan carrier protein LprG (225 aa).

The N-terminal stretch at M1–G21 is a signal peptide. Residue C22 is the site of N-palmitoyl cysteine attachment. C22 carries the S-diacylglycerol cysteine lipid modification.

This sequence belongs to the LppX/LprAFG lipoprotein family. Post-translationally, modified by Lgt on Cys-22 with an S-linked diacylglyceral, signal peptide is removed by LspA, Cys-22 is further modifed with a fatty acid on its amino group by Lnt yielding a triacylated protein.

The protein localises to the cell inner membrane. Functionally, helps membrane protein MAB_2807 (P55) transport triacylglycerides (TAG) across the inner cell membrane into the periplasm and probably ultimately to the outer membrane. Binds TAG in its hydrophobic cavity and transfers it between lipid bilayers. TAG probably regulates lipid metabolism and growth regulation and plays a structural role in the outer membrane. Also binds mannosides, lipoarabinomannan and lipomannan and various glycolipids in the same cavity. The protein is Lipoarabinomannan carrier protein LprG of Mycobacteroides abscessus (strain ATCC 19977 / DSM 44196 / CCUG 20993 / CIP 104536 / JCM 13569 / NCTC 13031 / TMC 1543 / L948) (Mycobacterium abscessus).